A 665-amino-acid chain; its full sequence is Methionine--tRNA ligase (665 aa).

Residues 12 to 22 (YYPSGKLHIGS) carry the 'HIGH' region motif. The 'KMSKS' region signature appears at 308-312 (KMSKS). Residue Lys311 participates in ATP binding. The region spanning 562–665 (TFDAVEIRVA…SSVPNGSIIG (104 aa)) is the tRNA-binding domain.

Belongs to the class-I aminoacyl-tRNA synthetase family. MetG type 2B subfamily. As to quaternary structure, homodimer.

The protein resides in the cytoplasm. The catalysed reaction is tRNA(Met) + L-methionine + ATP = L-methionyl-tRNA(Met) + AMP + diphosphate. Is required not only for elongation of protein synthesis but also for the initiation of all mRNA translation through initiator tRNA(fMet) aminoacylation. This Streptococcus pyogenes serotype M18 (strain MGAS8232) protein is Methionine--tRNA ligase (metG).